A 181-amino-acid polypeptide reads, in one-letter code: RING-H2 finger protein ATL72 (181 aa).

A helical membrane pass occupies residues 34–54 (VIILAALLCALICALSLNSAL). The RING-type; atypical zinc finger occupies 114–156 (CLICLGDFEDGEKVRVLPKCNHGFHVRCIDTWLLSRSSCPTCR).

Belongs to the RING-type zinc finger family. ATL subfamily.

The protein resides in the membrane. It catalyses the reaction S-ubiquitinyl-[E2 ubiquitin-conjugating enzyme]-L-cysteine + [acceptor protein]-L-lysine = [E2 ubiquitin-conjugating enzyme]-L-cysteine + N(6)-ubiquitinyl-[acceptor protein]-L-lysine.. It functions in the pathway protein modification; protein ubiquitination. The chain is RING-H2 finger protein ATL72 (ATL72) from Arabidopsis thaliana (Mouse-ear cress).